Reading from the N-terminus, the 536-residue chain is ATP synthase subunit alpha, mitochondrial (536 aa).

The transit peptide at 1-27 (MLRQAGTRLLKVPVCGLRPSITLKRGY) directs the protein to the mitochondrion. 197–204 (GDRQTGKT) lines the ATP pocket.

It belongs to the ATPase alpha/beta chains family. F-type ATPases have 2 components, CF(1) - the catalytic core - and CF(0) - the membrane proton channel. CF(1) has five subunits: alpha(3), beta(3), gamma(1), delta(1), epsilon(1). CF(0) has three main subunits: a, b and c.

It localises to the mitochondrion. Its subcellular location is the mitochondrion inner membrane. In terms of biological role, mitochondrial membrane ATP synthase (F(1)F(0) ATP synthase or Complex V) produces ATP from ADP in the presence of a proton gradient across the membrane which is generated by electron transport complexes of the respiratory chain. F-type ATPases consist of two structural domains, F(1) - containing the extramembraneous catalytic core, and F(0) - containing the membrane proton channel, linked together by a central stalk and a peripheral stalk. During catalysis, ATP synthesis in the catalytic domain of F(1) is coupled via a rotary mechanism of the central stalk subunits to proton translocation. Subunits alpha and beta form the catalytic core in F(1). Rotation of the central stalk against the surrounding alpha(3)beta(3) subunits leads to hydrolysis of ATP in three separate catalytic sites on the beta subunits. Subunit alpha does not bear the catalytic high-affinity ATP-binding sites. The chain is ATP synthase subunit alpha, mitochondrial (atp1) from Schizosaccharomyces pombe (strain 972 / ATCC 24843) (Fission yeast).